A 286-amino-acid chain; its full sequence is Ribosomal RNA small subunit methyltransferase A (286 aa).

S-adenosyl-L-methionine-binding residues include asparagine 28, leucine 30, glycine 55, glutamate 77, aspartate 103, and asparagine 123.

It belongs to the class I-like SAM-binding methyltransferase superfamily. rRNA adenine N(6)-methyltransferase family. RsmA subfamily.

The protein resides in the cytoplasm. It catalyses the reaction adenosine(1518)/adenosine(1519) in 16S rRNA + 4 S-adenosyl-L-methionine = N(6)-dimethyladenosine(1518)/N(6)-dimethyladenosine(1519) in 16S rRNA + 4 S-adenosyl-L-homocysteine + 4 H(+). In terms of biological role, specifically dimethylates two adjacent adenosines (A1518 and A1519) in the loop of a conserved hairpin near the 3'-end of 16S rRNA in the 30S particle. May play a critical role in biogenesis of 30S subunits. The sequence is that of Ribosomal RNA small subunit methyltransferase A from Bradyrhizobium sp. (strain ORS 278).